A 237-amino-acid polypeptide reads, in one-letter code: Ribosomal RNA small subunit methyltransferase G (237 aa).

Residues glycine 76, phenylalanine 81, 128 to 129, and arginine 147 contribute to the S-adenosyl-L-methionine site; that span reads VE.

It belongs to the methyltransferase superfamily. RNA methyltransferase RsmG family.

It localises to the cytoplasm. Specifically methylates the N7 position of a guanine in 16S rRNA. This is Ribosomal RNA small subunit methyltransferase G from Prochlorococcus marinus (strain AS9601).